The primary structure comprises 130 residues: Small ribosomal subunit protein uS11c (130 aa).

The protein belongs to the universal ribosomal protein uS11 family. As to quaternary structure, part of the 30S ribosomal subunit.

Its subcellular location is the plastid. The protein resides in the chloroplast. The sequence is that of Small ribosomal subunit protein uS11c from Chara vulgaris (Common stonewort).